The chain runs to 247 residues: Nodulation protein H (247 aa).

Residues 1-16 form a hydrophobic region; that stretch reads MTHSTLPPRPFAILAM.

Required for the formation of sulfated nod factor. Proposed to transfer activated sulfate (PAPS) to a N-acetylglucosamine of the nod factor. The protein is Nodulation protein H (nodH) of Rhizobium meliloti (Ensifer meliloti).